We begin with the raw amino-acid sequence, 784 residues long: LPS-assembly protein LptD (784 aa).

The N-terminal stretch at 1-24 (MKKRIPTLLATMIATALYSQQGLA) is a signal peptide. 2 disulfides stabilise this stretch: Cys31/Cys724 and Cys173/Cys725.

The protein belongs to the LptD family. In terms of assembly, component of the lipopolysaccharide transport and assembly complex. Interacts with LptE and LptA. Post-translationally, contains two intramolecular disulfide bonds.

It is found in the cell outer membrane. Together with LptE, is involved in the assembly of lipopolysaccharide (LPS) at the surface of the outer membrane. The chain is LPS-assembly protein LptD from Escherichia coli O157:H7.